Here is a 146-residue protein sequence, read N- to C-terminus: MKVLLLLAASIMAFGSIQVQGNIAQFGEMIRLKTGKRAELSYAFYGCHCGLGGKGSPKDATDRCCVTHDCCYKSLEKSGCGTKLLKYKYSHQGGQITCSANQNSCQKRLCQCDKAAAECFARNKKTYSLKYQFYPNMFCKGKKPKC.

A signal peptide spans 1 to 21 (MKVLLLLAASIMAFGSIQVQG). 7 cysteine pairs are disulfide-bonded: Cys-47/Cys-139, Cys-49/Cys-65, Cys-64/Cys-119, Cys-70/Cys-146, Cys-71/Cys-112, Cys-80/Cys-105, and Cys-98/Cys-110. Positions 48, 50, and 52 each coordinate Ca(2+). The active site involves His-68. Asp-69 is a Ca(2+) binding site. Asp-113 is an active-site residue.

It belongs to the phospholipase A2 family. It depends on Ca(2+) as a cofactor. As to expression, mainly in the Paneth cells adjacent to the stem population in the small intestines.

The protein resides in the secreted. It localises to the cell membrane. Its subcellular location is the mitochondrion outer membrane. It carries out the reaction a 1,2-diacyl-sn-glycero-3-phosphoethanolamine + H2O = a 1-acyl-sn-glycero-3-phosphoethanolamine + a fatty acid + H(+). It catalyses the reaction 1-hexadecanoyl-2-(9Z-octadecenoyl)-sn-glycero-3-phosphoethanolamine + H2O = 1-hexadecanoyl-sn-glycero-3-phosphoethanolamine + (9Z)-octadecenoate + H(+). The enzyme catalyses 1-hexadecanoyl-2-(9Z,12Z-octadecadienoyl)-sn-glycero-3-phosphoethanolamine + H2O = 1-hexadecanoyl-sn-glycero-3-phosphoethanolamine + (9Z,12Z)-octadecadienoate + H(+). The catalysed reaction is 1-hexadecanoyl-2-(5Z,8Z,11Z,14Z-eicosatetraenoyl)-sn-glycero-3-phosphoethanolamine + H2O = 1-hexadecanoyl-sn-glycero-3-phosphoethanolamine + (5Z,8Z,11Z,14Z)-eicosatetraenoate + H(+). It carries out the reaction N-hexadecanoyl-1,2-di-(9Z-octadecenoyl)-sn-glycero-3-phosphoethanolamine + H2O = N-hexadecanoyl-1-(9Z-octadecenoyl)-sn-glycero-3-phosphoethanolamine + (9Z)-octadecenoate + H(+). It catalyses the reaction 1,2-dihexadecanoyl-sn-glycero-3-phospho-(1'-sn-glycerol) + H2O = 1-hexadecanoyl-sn-glycero-3-phospho-(1'-sn-glycerol) + hexadecanoate + H(+). The enzyme catalyses 1-hexadecanoyl-2-(9Z-octadecenoyl)-sn-glycero-3-phosphoglycerol + H2O = 1-hexadecanoyl-sn-glycero-3-phosphoglycerol + (9Z)-octadecenoate + H(+). The catalysed reaction is 1-hexadecanoyl-2-(9Z-octadecenoyl)-sn-glycero-3-phospho-(1'-sn-glycerol) + H2O = 1-hexadecanoyl-sn-glycero-3-phospho-(1'-sn-glycerol) + (9Z)-octadecenoate + H(+). It carries out the reaction a 1,2-diacyl-sn-glycero-3-phosphocholine + H2O = a 1-acyl-sn-glycero-3-phosphocholine + a fatty acid + H(+). It catalyses the reaction 1,2-dihexadecanoyl-sn-glycero-3-phosphocholine + H2O = 1-hexadecanoyl-sn-glycero-3-phosphocholine + hexadecanoate + H(+). The enzyme catalyses 1-hexadecanoyl-2-(9Z-octadecenoyl)-sn-glycero-3-phosphocholine + H2O = 1-hexadecanoyl-sn-glycero-3-phosphocholine + (9Z)-octadecenoate + H(+). The catalysed reaction is 1-hexadecanoyl-2-(9Z,12Z-octadecadienoyl)-sn-glycero-3-phosphocholine + H2O = (9Z,12Z)-octadecadienoate + 1-hexadecanoyl-sn-glycero-3-phosphocholine + H(+). It carries out the reaction 1-hexadecanoyl-2-(4Z,7Z,10Z,13Z,16Z,19Z-docosahexaenoyl)-sn-glycero-3-phosphocholine + H2O = (4Z,7Z,10Z,13Z,16Z,19Z)-docosahexaenoate + 1-hexadecanoyl-sn-glycero-3-phosphocholine + H(+). Its function is as follows. Secretory calcium-dependent phospholipase A2 that primarily targets extracellular phospholipids with implications in host antimicrobial defense, inflammatory response and tissue regeneration. Hydrolyzes the ester bond of the fatty acyl group attached at sn-2 position of phospholipids (phospholipase A2 activity) with preference for phosphatidylethanolamines and phosphatidylglycerols over phosphatidylcholines. Contributes to lipid remodeling of cellular membranes and generation of lipid mediators involved in pathogen clearance. Displays bactericidal activity against Gram-positive bacteria by directly hydrolyzing phospholipids of the bacterial membrane. Upon sterile inflammation, targets membrane phospholipids of extracellular mitochondria released from activated platelets, generating free unsaturated fatty acids such as arachidonate that is used by neighboring leukocytes to synthesize inflammatory eicosanoids such as leukotrienes. Simultaneously, by compromising mitochondrial membrane integrity, promotes the release in circulation of potent damage-associated molecular pattern molecules that activate the innate immune response. Plays a stem cell regulator role in the intestinal crypt. Within intracellular compartment mediates Paneth cell differentiation and its stem cell supporting functions by inhibiting Wnt signaling pathway in intestinal stem cell (ICS). Secreted in the intestinal lumen upon inflammation, acts in an autocrine way and promotes prostaglandin E2 synthesis that stimulates Wnt signaling pathway in ICS cells and tissue regeneration. May play a role in the biosynthesis of N-acyl ethanolamines that regulate energy metabolism and inflammation. Hydrolyzes N-acyl phosphatidylethanolamines to N-acyl lysophosphatidylethanolamines, which are further cleaved by a lysophospholipase D to release N-acyl ethanolamines. Independent of its catalytic activity, acts as a ligand for integrins. Binds to and activates integrins ITGAV:ITGB3, ITGA4:ITGB1 and ITGA5:ITGB1. Binds to a site (site 2) which is distinct from the classical ligand-binding site (site 1) and induces integrin conformational changes and enhanced ligand binding to site 1. Induces cell proliferation in an integrin-dependent manner. The protein is Phospholipase A2, membrane associated (Pla2g2a) of Mus musculus (Mouse).